The following is a 100-amino-acid chain: NADH-quinone oxidoreductase subunit K (100 aa).

A run of 3 helical transmembrane segments spans residues 1–21, 28–48, and 64–84; these read MIGL…GLAG, ILLL…GFVA, and FIIS…ILWF.

This sequence belongs to the complex I subunit 4L family. NDH-1 is composed of 14 different subunits. Subunits NuoA, H, J, K, L, M, N constitute the membrane sector of the complex.

It is found in the cell inner membrane. The catalysed reaction is a quinone + NADH + 5 H(+)(in) = a quinol + NAD(+) + 4 H(+)(out). NDH-1 shuttles electrons from NADH, via FMN and iron-sulfur (Fe-S) centers, to quinones in the respiratory chain. The immediate electron acceptor for the enzyme in this species is believed to be ubiquinone. Couples the redox reaction to proton translocation (for every two electrons transferred, four hydrogen ions are translocated across the cytoplasmic membrane), and thus conserves the redox energy in a proton gradient. The protein is NADH-quinone oxidoreductase subunit K of Helicobacter pylori (strain ATCC 700392 / 26695) (Campylobacter pylori).